The following is a 338-amino-acid chain: TPR repeat-containing protein MJ0941 (338 aa).

TPR repeat units follow at residues 27–62, 63–96, 97–130, 131–164, 165–198, 199–232, 268–301, and 302–335; these read LEAV…EPDF, YLAL…ESKN, PITW…ENRF, LSAF…TPNF, VPMW…KPHD, KNAL…LNVK, VALW…QPHY, and IKAL…IHKD.

The polypeptide is TPR repeat-containing protein MJ0941 (Methanocaldococcus jannaschii (strain ATCC 43067 / DSM 2661 / JAL-1 / JCM 10045 / NBRC 100440) (Methanococcus jannaschii)).